A 247-amino-acid chain; its full sequence is Mast cell protease 2 (247 aa).

Residues 1-19 (MHLLALHLLLFLLGSRAKA) form the signal peptide. Residues 20–21 (GE) constitute a propeptide, activation peptide. The Peptidase S1 domain maps to 22-245 (IIGGTECKPH…YRPWINKILR (224 aa)). Residues Cys-51 and Cys-67 are joined by a disulfide bond. His-66 serves as the catalytic Charge relay system. Asn-80 is a glycosylation site (N-linked (GlcNAc...) asparagine). The active-site Charge relay system is the Asp-110. Disulfide bonds link Cys-144-Cys-209 and Cys-175-Cys-188. Ser-203 functions as the Charge relay system in the catalytic mechanism.

This sequence belongs to the peptidase S1 family. Granzyme subfamily.

In Meriones unguiculatus (Mongolian jird), this protein is Mast cell protease 2.